The following is a 308-amino-acid chain: ADP-L-glycero-D-manno-heptose-6-epimerase (308 aa).

NADP(+)-binding positions include 10–11 (FI), 31–32 (DN), lysine 38, lysine 53, 75–79 (EGACS), and asparagine 92. Residue tyrosine 139 is the Proton acceptor of the active site. Position 143 (lysine 143) interacts with NADP(+). Residue asparagine 168 coordinates substrate. NADP(+) contacts are provided by valine 169 and lysine 177. Lysine 177 functions as the Proton acceptor in the catalytic mechanism. Substrate-binding positions include serine 179, histidine 186, 200–203 (FAGS), arginine 208, and tyrosine 271.

Belongs to the NAD(P)-dependent epimerase/dehydratase family. HldD subfamily. As to quaternary structure, homopentamer. The cofactor is NADP(+).

It catalyses the reaction ADP-D-glycero-beta-D-manno-heptose = ADP-L-glycero-beta-D-manno-heptose. The protein operates within nucleotide-sugar biosynthesis; ADP-L-glycero-beta-D-manno-heptose biosynthesis; ADP-L-glycero-beta-D-manno-heptose from D-glycero-beta-D-manno-heptose 7-phosphate: step 4/4. Its function is as follows. Catalyzes the interconversion between ADP-D-glycero-beta-D-manno-heptose and ADP-L-glycero-beta-D-manno-heptose via an epimerization at carbon 6 of the heptose. The sequence is that of ADP-L-glycero-D-manno-heptose-6-epimerase from Haemophilus influenzae (strain PittGG).